The following is a 148-amino-acid chain: Large ribosomal subunit protein uL15 (148 aa).

A disordered region spans residues 1 to 51; the sequence is MNLSSLKPAEGAVKSRKRIGRGPGSGLGGTSTRGHKGAKSRSGYSKKIGFE. Residues 21–31 show a composition bias toward gly residues; sequence RGPGSGLGGTS.

Belongs to the universal ribosomal protein uL15 family. Part of the 50S ribosomal subunit.

Its function is as follows. Binds to the 23S rRNA. This Porphyromonas gingivalis (strain ATCC 33277 / DSM 20709 / CIP 103683 / JCM 12257 / NCTC 11834 / 2561) protein is Large ribosomal subunit protein uL15.